A 239-amino-acid polypeptide reads, in one-letter code: Ribosomal RNA small subunit methyltransferase G (239 aa).

S-adenosyl-L-methionine is bound by residues Gly77, Phe82, 128–129, and Arg146; that span reads AE. The interval 215-239 is disordered; the sequence is DKRSQTPKKYPRKPGTPNKSPLLEK.

The protein belongs to the methyltransferase superfamily. RNA methyltransferase RsmG family.

The protein resides in the cytoplasm. Specifically methylates the N7 position of guanine in position 535 of 16S rRNA. The protein is Ribosomal RNA small subunit methyltransferase G of Staphylococcus saprophyticus subsp. saprophyticus (strain ATCC 15305 / DSM 20229 / NCIMB 8711 / NCTC 7292 / S-41).